Consider the following 267-residue polypeptide: MPRAFLVKKPCVSTCKRNWSELPDEERGEIYVPVSLGFCPPQPYREPEPSVAEPPSCPLALNMSLRDSSYSMAPGPCVVAQLPSEDMGHLTDPQSRDHGFLRTKMKVTLGDSPSGDLFTCRVCQKAFTYQRMLNRHMKCHNDVKRHLCTYCGKGFNDTFDLKRHVRTHTGVRPYKCSLCDKAFTQRCSLESHLKKIHGVQQKYAYKERRAKLYVCEECGCTSESQEGHVLHLKEHHPDSPLLRKTSKKVAVALQNTVTSLLQGSPHL.

4 C2H2-type zinc fingers span residues 118 to 140 (FTCR…MKCH), 146 to 168 (HLCT…VRTH), 174 to 197 (YKCS…KKIH), and 213 to 235 (YVCE…LKEH).

In terms of tissue distribution, expressed in fetal kidney, and also in adult pancreas and placenta. Not expressed in intestine, peripheral blood lymphocytes and ovary.

Its subcellular location is the nucleus. Its function is as follows. Putative transcription factor. Involved in hair formation and spermatogenesis. May function in the differentiation and/or maintenance of the urogenital system. This Homo sapiens (Human) protein is Putative transcription factor Ovo-like 1 (OVOL1).